The following is a 204-amino-acid chain: Large ribosomal subunit protein bL25 (204 aa).

Belongs to the bacterial ribosomal protein bL25 family. CTC subfamily. Part of the 50S ribosomal subunit; part of the 5S rRNA/L5/L18/L25 subcomplex. Contacts the 5S rRNA. Binds to the 5S rRNA independently of L5 and L18.

This is one of the proteins that binds to the 5S RNA in the ribosome where it forms part of the central protuberance. This Burkholderia pseudomallei (strain 668) protein is Large ribosomal subunit protein bL25.